The chain runs to 149 residues: Protein TraJ (149 aa).

It localises to the cell membrane. This protein is essential for positively regulating the expression of transfer genes that are involved in the conjugal transfer of DNA between bacterial cells. The protein is Protein TraJ (traJ) of Escherichia coli.